A 783-amino-acid polypeptide reads, in one-letter code: Protein transport protein SEC23 B (783 aa).

Zn(2+) is bound by residues C59, C62, C81, and C84. A zinc finger-like region spans residues 59 to 84 (CRICTAALNPFARVDFLAKIWICPIC).

This sequence belongs to the SEC23/SEC24 family. SEC23 subfamily. As to quaternary structure, component of the coat protein complex II (COPII), composed of at least five proteins: the Sec23/24 complex, the Sec13/31 complex and Sar1. Interacts with SEC24A.

It localises to the cytoplasmic vesicle. The protein localises to the COPII-coated vesicle membrane. It is found in the endoplasmic reticulum membrane. Its subcellular location is the membrane. In terms of biological role, component of the coat protein complex II (COPII) which promotes the formation of transport vesicles from the endoplasmic reticulum (ER). The coat has two main functions, the physical deformation of the endoplasmic reticulum membrane into vesicles and the selection of cargo molecules. The protein is Protein transport protein SEC23 B of Arabidopsis thaliana (Mouse-ear cress).